Here is a 677-residue protein sequence, read N- to C-terminus: Sulfate transporter 2.1 (677 aa).

Over 1-118 (MKERDSESFE…NYKLTMFKND (118 aa)) the chain is Cytoplasmic. The interval 23–54 (STHMIQMAMANSGSSAAAQAGQDQPDRSKWLL) is disordered. Low complexity predominate over residues 28-44 (QMAMANSGSSAAAQAGQ). Residues 119 to 139 (LMAGLTLASLCIPQSIGYATL) form a helical membrane-spanning segment. Residues 140–141 (AK) lie on the Extracellular side of the membrane. The helical transmembrane segment at 142–162 (LDPQYGLYTSVVPPLIYALMG) threads the bilayer. Over 163–166 (TSRE) the chain is Cytoplasmic. A helical membrane pass occupies residues 167-187 (IAIGPVAVVSLLISSMLQKLI). Topologically, residues 188–198 (DPETDPLGYKK) are extracellular. Residues 199-219 (LVLTTTFFAGIFQASFGLFRL) form a helical membrane-spanning segment. The Cytoplasmic segment spans residues 220–221 (GF). A helical transmembrane segment spans residues 222 to 242 (LVDFLSHAAIVGFMGGAAIVI). The Extracellular segment spans residues 243 to 278 (GLQQLKGLLGITNFTTNTDIVSVLRAVWRSCQQQWS). An N-linked (GlcNAc...) asparagine glycan is attached at asparagine 255. Residues 279–299 (PHTFILGCSFLSFILITRFIG) form a helical membrane-spanning segment. The Cytoplasmic segment spans residues 300–304 (KKYKK). The chain crosses the membrane as a helical span at residues 305 to 325 (LFWLPAIAPLIAVVVSTLMVF). At 326 to 360 (LTKADEHGVKTVRHIKGGLNPMSIQDLDFNTPHLG) the chain is on the extracellular side. The chain crosses the membrane as a helical span at residues 361–381 (QIAKIGLIIAIVALTEAIAVG). Topologically, residues 382–397 (RSFAGIKGYRLDGNKE) are cytoplasmic. A helical membrane pass occupies residues 398 to 418 (MVAIGFMNVLGSFTSCYAATG). Over 419–426 (SFSRTAVN) the chain is Extracellular. A helical transmembrane segment spans residues 427-447 (FAAGCETAMSNIVMAVTVFVA). The Cytoplasmic segment spans residues 448–454 (LECLTRL). Residues 455–475 (LYYTPIAILASIILSALPGLI) form a helical membrane-spanning segment. The Extracellular portion of the chain corresponds to 476–490 (NINEAIHIWKVDKFD). The helical transmembrane segment at 491 to 511 (FLALIGAFFGVLFASVEIGLL) threads the bilayer. Over 512-677 (VAVVISFAKI…ALDACFGLKV (166 aa)) the chain is Cytoplasmic. The STAS domain maps to 548–672 (YPMTVKTPGV…LTIGEALDAC (125 aa)).

This sequence belongs to the SLC26A/SulP transporter (TC 2.A.53) family. In terms of tissue distribution, expressed in root cap, central cylinder of roots and in vascular tissues of leaves.

Its subcellular location is the membrane. Functionally, low-affinity H(+)/sulfate cotransporter that may be involved in root-to-shoot translocation of sulfate. Plays a central role in the regulation of sulfate assimilation. This chain is Sulfate transporter 2.1 (SULTR2;1), found in Arabidopsis thaliana (Mouse-ear cress).